Here is a 165-residue protein sequence, read N- to C-terminus: Nucleotide-binding protein CHY_1197 (165 aa).

This sequence belongs to the YajQ family.

In terms of biological role, nucleotide-binding protein. The polypeptide is Nucleotide-binding protein CHY_1197 (Carboxydothermus hydrogenoformans (strain ATCC BAA-161 / DSM 6008 / Z-2901)).